The sequence spans 417 residues: Sulfate adenylyltransferase (417 aa).

It belongs to the sulfate adenylyltransferase family.

The enzyme catalyses sulfate + ATP + H(+) = adenosine 5'-phosphosulfate + diphosphate. Its pathway is sulfur metabolism; hydrogen sulfide biosynthesis; sulfite from sulfate: step 1/3. The polypeptide is Sulfate adenylyltransferase (Psychrobacter cryohalolentis (strain ATCC BAA-1226 / DSM 17306 / VKM B-2378 / K5)).